An 84-amino-acid polypeptide reads, in one-letter code: U-actitoxin-Avd8e (84 aa).

The first 22 residues, 1 to 22, serve as a signal peptide directing secretion; sequence MASARTLVLLLIGAVLMCQVSA. Residues 23-41 constitute a propeptide that is removed on maturation; the sequence is DSELLNEILAAHMEEDMPE. In terms of domain architecture, ShKT spans 44–84; that stretch reads CIDRYRSNICGSVIRPLDCTRRKSRMGRFARTNCKKLCGFC. 3 disulfide bridges follow: Cys44–Cys84, Cys53–Cys77, and Cys62–Cys81.

It belongs to the sea anemone 8 toxin family.

The protein localises to the secreted. The protein resides in the nematocyst. This chain is U-actitoxin-Avd8e, found in Anemonia viridis (Snakelocks anemone).